A 302-amino-acid polypeptide reads, in one-letter code: Glutamyl-Q tRNA(Asp) synthetase (302 aa).

L-glutamate-binding positions include 13-17 (RFAPS) and Asp49. Positions 16-26 (PSPTGPLHLGS) match the 'HIGH' region motif. 4 residues coordinate Zn(2+): Cys105, Cys107, Tyr119, and Cys123. Tyr178 and Arg196 together coordinate L-glutamate. A 'KMSKS' region motif is present at residues 234-238 (KLSKQ). Lys237 contributes to the ATP binding site.

This sequence belongs to the class-I aminoacyl-tRNA synthetase family. GluQ subfamily. Zn(2+) serves as cofactor.

In terms of biological role, catalyzes the tRNA-independent activation of glutamate in presence of ATP and the subsequent transfer of glutamate onto a tRNA(Asp). Glutamate is transferred on the 2-amino-5-(4,5-dihydroxy-2-cyclopenten-1-yl) moiety of the queuosine in the wobble position of the QUC anticodon. The polypeptide is Glutamyl-Q tRNA(Asp) synthetase (Methylococcus capsulatus (strain ATCC 33009 / NCIMB 11132 / Bath)).